The sequence spans 224 residues: Large ribosomal subunit protein bL25 (224 aa).

The disordered stretch occupies residues 195–224; it reads TVEEVDEAAEVDAADVPATEQGTDESKDGE. Acidic residues predominate over residues 197-207; the sequence is EEVDEAAEVDA.

This sequence belongs to the bacterial ribosomal protein bL25 family. CTC subfamily. In terms of assembly, part of the 50S ribosomal subunit; part of the 5S rRNA/L5/L18/L25 subcomplex. Contacts the 5S rRNA. Binds to the 5S rRNA independently of L5 and L18.

Its function is as follows. This is one of the proteins that binds to the 5S RNA in the ribosome where it forms part of the central protuberance. This Psychrobacter cryohalolentis (strain ATCC BAA-1226 / DSM 17306 / VKM B-2378 / K5) protein is Large ribosomal subunit protein bL25.